A 307-amino-acid polypeptide reads, in one-letter code: Ribosomal RNA large subunit methyltransferase F (307 aa).

It belongs to the methyltransferase superfamily. METTL16/RlmF family.

Its subcellular location is the cytoplasm. The enzyme catalyses adenosine(1618) in 23S rRNA + S-adenosyl-L-methionine = N(6)-methyladenosine(1618) in 23S rRNA + S-adenosyl-L-homocysteine + H(+). Specifically methylates the adenine in position 1618 of 23S rRNA. This is Ribosomal RNA large subunit methyltransferase F from Bacteroides thetaiotaomicron (strain ATCC 29148 / DSM 2079 / JCM 5827 / CCUG 10774 / NCTC 10582 / VPI-5482 / E50).